The following is an 80-amino-acid chain: uncharacterized protein (80 aa).

Positions 1-15 (MVKLSFTLRFGDVWV) are cleaved as a signal peptide.

This is an uncharacterized protein from Archaeoglobus fulgidus (strain ATCC 49558 / DSM 4304 / JCM 9628 / NBRC 100126 / VC-16).